We begin with the raw amino-acid sequence, 398 residues long: Argininosuccinate synthase (398 aa).

ATP is bound by residues 9 to 17 (AYSGGVDTS) and A37. Y88 provides a ligand contact to L-citrulline. Position 118 (G118) interacts with ATP. L-aspartate is bound by residues T120, N124, and D125. Residue N124 coordinates L-citrulline. R128, S176, S185, E261, and Y273 together coordinate L-citrulline.

This sequence belongs to the argininosuccinate synthase family. Type 1 subfamily. Homotetramer.

The protein resides in the cytoplasm. The catalysed reaction is L-citrulline + L-aspartate + ATP = 2-(N(omega)-L-arginino)succinate + AMP + diphosphate + H(+). The protein operates within amino-acid biosynthesis; L-arginine biosynthesis; L-arginine from L-ornithine and carbamoyl phosphate: step 2/3. The chain is Argininosuccinate synthase from Gloeobacter violaceus (strain ATCC 29082 / PCC 7421).